The sequence spans 138 residues: Ribulose bisphosphate carboxylase small subunit (138 aa).

This sequence belongs to the RuBisCO small chain family. In terms of assembly, heterohexadecamer of 8 large and 8 small subunits.

The protein localises to the plastid. Its subcellular location is the chloroplast. Its function is as follows. RuBisCO catalyzes two reactions: the carboxylation of D-ribulose 1,5-bisphosphate, the primary event in carbon dioxide fixation, as well as the oxidative fragmentation of the pentose substrate in the photorespiration process. Both reactions occur simultaneously and in competition at the same active site. Although the small subunit is not catalytic it is essential for maximal activity. The chain is Ribulose bisphosphate carboxylase small subunit from Pyropia dentata (Red alga).